The sequence spans 400 residues: Enoyl-[acyl-carrier-protein] reductase [NADH] (400 aa).

NAD(+) contacts are provided by residues glycine 48–tyrosine 53, phenylalanine 74–glutamate 75, aspartate 111–alanine 112, and leucine 139–alanine 140. Tyrosine 225 contributes to the substrate binding site. The Proton donor role is filled by tyrosine 235. Residues lysine 244 and valine 273 to threonine 275 contribute to the NAD(+) site.

Belongs to the TER reductase family. As to quaternary structure, monomer.

It catalyses the reaction a 2,3-saturated acyl-[ACP] + NAD(+) = a (2E)-enoyl-[ACP] + NADH + H(+). It functions in the pathway lipid metabolism; fatty acid biosynthesis. In terms of biological role, involved in the final reduction of the elongation cycle of fatty acid synthesis (FAS II). Catalyzes the reduction of a carbon-carbon double bond in an enoyl moiety that is covalently linked to an acyl carrier protein (ACP). This chain is Enoyl-[acyl-carrier-protein] reductase [NADH], found in Shewanella baltica (strain OS223).